Consider the following 377-residue polypeptide: Transmembrane protein 237A (377 aa).

Composition is skewed to basic and acidic residues over residues 1-11 (MCVTSRADKMP), 43-64 (LESRRQSESREPLTPEPHDNPP), and 74-87 (HTFENEGEQQDHPN). A disordered region spans residues 1–124 (MCVTSRADKM…NQSHNELGVE (124 aa)). Transmembrane regions (helical) follow at residues 198 to 218 (IIGLFSHGFLAGYAVWNIIVV), 239 to 259 (LAYPAQSLLYLLLAISTVSAF), 273 to 293 (GFLTLDPAALASFLYFAALIL), and 326 to 346 (PWIVVNLVVALLVGLAWVFVA).

This sequence belongs to the TMEM237 family.

The protein resides in the membrane. It is found in the cell projection. The protein localises to the cilium. In terms of biological role, component of the transition zone in primary cilia. Required for ciliogenesis. This is Transmembrane protein 237A (tmem237a) from Danio rerio (Zebrafish).